Consider the following 240-residue polypeptide: Agamous-like MADS-box protein AGL16 (240 aa).

One can recognise an MADS-box domain in the interval 1 to 61 (MGRGKIAIKR…GRLYDFSSSS (61 aa)). Positions 86–176 (IQFWQKEAAI…HKKVNLMHQQ (91 aa)) constitute a K-box domain.

As to quaternary structure, homodimer. Interacts with AGL15, AGL24, AP1, AGL6, AG, AGL1, AGL11, AGL5, SEP3, SEP1, AGL63, AGL14, SOC1 and AGL21. Interacts with AGL63. Interacts with SVP. In terms of tissue distribution, expressed at high levels in leaves, moderate levels in roots, seedlings and stems, and at low levels in flowers, pollen and siliques. Accumulates in leaf guard cells and trichomes. Also present in epidermal cells of roots. Expressed in mature guard cells.

The protein localises to the nucleus. Functionally, probable transcription factor involved in the regulation of flowering time in long-day photoperiod. Participates in the repression of FT expression and floral transition, by interacting closely with the FLC-SVP pathways. Functions in the satellite meristemoid lineage of stomatal development. The protein is Agamous-like MADS-box protein AGL16 (AGL16) of Arabidopsis thaliana (Mouse-ear cress).